Consider the following 99-residue polypeptide: Elongin-C (99 aa).

N-acetylserine is present on S2. S2 is subject to Phosphoserine.

This sequence belongs to the SKP1 family. In terms of assembly, heterodimer with ELA1. Component of a CRL3 E3 ubiquitin ligase complex consisting of the cullin CUL3, the linker protein ELC1, the substrate receptor ELA1, and the RING protein HRT1. Interacts with CIN5. Interacts with PCL6. Interacts with SNF4. Interacts with the large RNA polymerase II subunit RPO21 in a manner dependent on DEF1. Interacts with DEF1. Interacts with RAD7. Interacts with RAD16.

The protein resides in the cytoplasm. Its subcellular location is the nucleus. Its function is as follows. As part of the CRL3 E3 ubiquitin ligase complex; polyubiquitylates monoubiquitylated RNA polymerase II subunit RPO21 to trigger its proteolysis; plays a role in global genomic repair. Prevents degradation of interacting proteins like PCL6 by the proteasome. This is Elongin-C (ELC1) from Saccharomyces cerevisiae (strain ATCC 204508 / S288c) (Baker's yeast).